Reading from the N-terminus, the 433-residue chain is MSNRVVIIGRPNVGKSTLFNRIIGKRYAIVEDYPGVTRDKIEAKAEWAGKEFIIVDTGGLVPETKDELIREVKKVVEQEIPKADVILFVVDGKEGLNPLDQEIAKYLYPYADKVLLVVNKIDNLRQEKNVAEFYTLGFEKIFPISAQHGKGVGELLDEVVKYLKEEKVETVEEGIKVAFIGRPNVGKSSLVNAILKDERVIVSPIAGTTRDAIEIPFRWKDKNFILIDTAGVRRPSNVEYGIEFYSVGRSLKAIDLADVCCLVIDASEGPTRQDKRLGGLIERRYKGCVIVANKMDISPWSEEELEGIIRKELFFLDFAPIVFTVATKGKGVEELLNWIDVVYKDYTKQHKTSFVNRAVHKILSEKPPPRYRGKEVKVYYAFQESTKPPTIVLITNYPDAWKENYKRFFIKKLREYLNIKYAPIKLVIKGRED.

2 consecutive EngA-type G domains span residues N3–K167 and I175–T347. Residues G9–S16, D56–L60, N119–D122, G181–S188, D228–V232, and N293–D296 contribute to the GTP site. The 85-residue stretch at K348 to E432 folds into the KH-like domain.

It belongs to the TRAFAC class TrmE-Era-EngA-EngB-Septin-like GTPase superfamily. EngA (Der) GTPase family. Associates with the 50S ribosomal subunit.

Its function is as follows. GTPase that plays an essential role in the late steps of ribosome biogenesis. The chain is GTPase Der from Aquifex aeolicus (strain VF5).